The chain runs to 339 residues: Probable scoulerine-9-O-methyltransferase OMT3B (339 aa).

Residue methionine 161 participates in S-adenosyl-L-methionine binding. Aspartate 164 contacts substrate. S-adenosyl-L-methionine-binding positions include threonine 165, glycine 191, aspartate 214, 228–229 (DV), and lysine 242. Position 243 to 247 (243 to 247 (SILHE)) interacts with substrate. Residue histidine 246 is the Proton acceptor of the active site.

The protein belongs to the class I-like SAM-binding methyltransferase superfamily. Cation-independent O-methyltransferase family. COMT subfamily.

It catalyses the reaction (S)-scoulerine + S-adenosyl-L-methionine = (S)-tetrahydrocolumbamine + S-adenosyl-L-homocysteine + H(+). Its pathway is alkaloid biosynthesis. Methyltransferase involved in the biosynthesis of the benzylisoquinoline alkaloid noscapine. Catalyzes the conversion of (S)-scoulerine to (S)-tetrahydrocolumbamine. The sequence is that of Probable scoulerine-9-O-methyltransferase OMT3B from Papaver somniferum (Opium poppy).